Reading from the N-terminus, the 122-residue chain is Large ribosomal subunit protein uL14c (122 aa).

Belongs to the universal ribosomal protein uL14 family. As to quaternary structure, part of the 50S ribosomal subunit.

The protein resides in the plastid. Its subcellular location is the chloroplast. In terms of biological role, binds to 23S rRNA. The sequence is that of Large ribosomal subunit protein uL14c from Manihot esculenta (Cassava).